A 97-amino-acid polypeptide reads, in one-letter code: Serine protease inhibitor Kazal-type 8 (97 aa).

An N-terminal signal peptide occupies residues methionine 1–alanine 21. The 61-residue stretch at aspartate 36 to asparagine 96 folds into the Kazal-like domain. 3 disulfide bridges follow: cysteine 42–cysteine 76, cysteine 49–cysteine 73, and cysteine 62–cysteine 94. N-linked (GlcNAc...) asparagine glycosylation is present at asparagine 85.

It localises to the secreted. Probable serine protease inhibitor. The protein is Serine protease inhibitor Kazal-type 8 (SPINK8) of Homo sapiens (Human).